The sequence spans 142 residues: Hemoglobin subunit alpha (142 aa).

The Globin domain occupies 2-142 (VLSAADKGHV…VSTVLTSKYR (141 aa)). S4 is modified (phosphoserine). Residues K8 and K12 each carry the N6-succinyllysine modification. Position 17 is an N6-acetyllysine; alternate (K17). Position 17 is an N6-succinyllysine; alternate (K17). Y25 carries the post-translational modification Phosphotyrosine. S36 is modified (phosphoserine). K41 carries the post-translational modification N6-succinyllysine. S50 is modified (phosphoserine). H59 lines the O2 pocket. H88 contributes to the heme b binding site. Residue S103 is modified to Phosphoserine. Position 109 is a phosphothreonine (T109). S125 carries the phosphoserine modification. T135 and T138 each carry phosphothreonine. S139 carries the post-translational modification Phosphoserine.

Belongs to the globin family. Heterotetramer of two alpha chains and two beta chains. In terms of tissue distribution, red blood cells.

Involved in oxygen transport from the lung to the various peripheral tissues. In terms of biological role, hemopressin acts as an antagonist peptide of the cannabinoid receptor CNR1. Hemopressin-binding efficiently blocks cannabinoid receptor CNR1 and subsequent signaling. This chain is Hemoglobin subunit alpha (HBA), found in Notamacropus eugenii (Tammar wallaby).